The sequence spans 154 residues: Putative pre-16S rRNA nuclease (154 aa).

Belongs to the YqgF nuclease family.

The protein resides in the cytoplasm. Could be a nuclease involved in processing of the 5'-end of pre-16S rRNA. This Ruegeria pomeroyi (strain ATCC 700808 / DSM 15171 / DSS-3) (Silicibacter pomeroyi) protein is Putative pre-16S rRNA nuclease.